A 1772-amino-acid chain; its full sequence is Merozoite surface protein 1 (1772 aa).

The first 18 residues, 1 to 18 (MKVIGLLFSFVFFAIKCK), serve as a signal peptide directing secretion. Asparagine 54 carries an N-linked (GlcNAc...) asparagine glycan. The interval 290–319 (TGGQSSTEPGSGGSSASGTSSSGQASAGTG) is disordered. The span at 305-319 (ASGTSSSGQASAGTG) shows a compositional bias: low complexity. 2 N-linked (GlcNAc...) asparagine glycosylation sites follow: asparagine 406 and asparagine 646. The segment at 703–796 (KERMEQGPAI…QPSQAASSTT (94 aa)) is disordered. The span at 724-796 (SAESSTDRST…QPSQAASSTT (73 aa)) shows a compositional bias: low complexity. Residue asparagine 829 is glycosylated (N-linked (GlcNAc...) asparagine). Residues 924–1070 (AAPTPVTPAA…SRAESEEDMP (147 aa)) are disordered. Low complexity-rich tracts occupy residues 930 to 946 (TPAA…PDVQ) and 956 to 1052 (SQQP…NSQS). Asparagine 1018 and asparagine 1090 each carry an N-linked (GlcNAc...) asparagine glycan. A disordered region spans residues 1362–1383 (GAVPGSGTDTRVAGSSVDDNED). 4 N-linked (GlcNAc...) asparagine glycosylation sites follow: asparagine 1408, asparagine 1446, asparagine 1541, and asparagine 1629. EGF-like domains follow at residues 1661–1703 (HVCV…VENN) and 1704–1752 (NPTC…FCSS). Cysteine 1663 and cysteine 1675 form a disulfide bridge. A glycan (N-linked (GlcNAc...) asparagine) is linked at asparagine 1680. 4 disulfide bridges follow: cysteine 1687-cysteine 1699, cysteine 1707-cysteine 1720, cysteine 1714-cysteine 1734, and cysteine 1736-cysteine 1750. Serine 1751 is lipidated: GPI-anchor amidated serine. Positions 1752–1772 (SSSFMGLSILLIITLIVFNIF) are cleaved as a propeptide — removed in mature form.

Forms a complex composed of subunits p83, p30, p38, and p42 which remain non-covalently associated; the complex is formed at the merozoite surface prior to egress from host erythrocytes. The p230 precursor is cleaved by SUB1 prior to merozoite egress into 4 subunits p83, p30, p38, and p42 which remain non-covalently associated. In a second processing step during erythrocyte invasion, p42 is cleaved by SUB2 into p33 and p19; the latter remains attached to the merozoite surface via its GPI-anchor and stays on the surface during the subsequent ring stage.

The protein localises to the cell membrane. It is found in the secreted. Its function is as follows. During the asexual blood stage, involved in merozoite egress from host erythrocytes possibly via its interaction with the host cytoskeleton protein spectrin resulting in the destabilization of the host cytoskeleton and thus leading to erythrocyte cell membrane rupture. Involved in the binding to host erythrocytes and is required for host erythrocyte invasion. This is Merozoite surface protein 1 from Plasmodium yoelii yoelii.